Here is an 892-residue protein sequence, read N- to C-terminus: Alanine--tRNA ligase (892 aa).

Residues His-577, His-581, Cys-680, and His-684 each coordinate Zn(2+).

This sequence belongs to the class-II aminoacyl-tRNA synthetase family. The cofactor is Zn(2+).

The protein resides in the cytoplasm. The catalysed reaction is tRNA(Ala) + L-alanine + ATP = L-alanyl-tRNA(Ala) + AMP + diphosphate. Functionally, catalyzes the attachment of alanine to tRNA(Ala) in a two-step reaction: alanine is first activated by ATP to form Ala-AMP and then transferred to the acceptor end of tRNA(Ala). Also edits incorrectly charged Ser-tRNA(Ala) and Gly-tRNA(Ala) via its editing domain. The protein is Alanine--tRNA ligase of Paenarthrobacter aurescens (strain TC1).